A 182-amino-acid polypeptide reads, in one-letter code: Orotate phosphoribosyltransferase (182 aa).

Residues arginine 91, lysine 92, lysine 95, histidine 97, and 117-125 contribute to the 5-phospho-alpha-D-ribose 1-diphosphate site; that span reads EDVTTTGGS. Orotate contacts are provided by threonine 121 and arginine 149.

Belongs to the purine/pyrimidine phosphoribosyltransferase family. PyrE subfamily. In terms of assembly, homodimer. Mg(2+) is required as a cofactor.

The enzyme catalyses orotidine 5'-phosphate + diphosphate = orotate + 5-phospho-alpha-D-ribose 1-diphosphate. It participates in pyrimidine metabolism; UMP biosynthesis via de novo pathway; UMP from orotate: step 1/2. In terms of biological role, catalyzes the transfer of a ribosyl phosphate group from 5-phosphoribose 1-diphosphate to orotate, leading to the formation of orotidine monophosphate (OMP). The chain is Orotate phosphoribosyltransferase from Pyrococcus abyssi (strain GE5 / Orsay).